We begin with the raw amino-acid sequence, 255 residues long: Probable cyclic nucleotide phosphodiesterase syc0937_d (255 aa).

Fe cation is bound by residues D19, H21, D59, N89, H157, H196, and H198. Residues H21, D59, and 89–90 (NH) contribute to the AMP site. An AMP-binding site is contributed by H198.

This sequence belongs to the cyclic nucleotide phosphodiesterase class-III family. Fe(2+) is required as a cofactor.

The protein is Probable cyclic nucleotide phosphodiesterase syc0937_d of Synechococcus sp. (strain ATCC 27144 / PCC 6301 / SAUG 1402/1) (Anacystis nidulans).